Reading from the N-terminus, the 249-residue chain is MKTVFILISMLFPVAVMAQKSVKISDDISITQLSDKVYTYVSLAEIEGWGMVPSNGMIVINNHQAALLDTPINDAQTEMLVNWVTDSLHAKVTTFIPNHWHGDCIGGLGYLQRKGVQSYANQMTIDLAKEKGLPVPEHGFTDSLTVSLDGMPLQCYYLGGGHATDNIVVWLPTENILFGGCMLKDNQATSIGNISDADVTAWPKTLDKVKAKFPSARYVVPGHGDYGGTELIEHTKQIVNQYIESTSKP.

The signal sequence occupies residues 1–18; it reads MKTVFILISMLFPVAVMA. H99, H101, D103, H162, and C181 together coordinate Zn(2+). K184 and N193 together coordinate substrate. H223 is a binding site for Zn(2+).

This sequence belongs to the metallo-beta-lactamase superfamily. Class-B beta-lactamase family. In terms of assembly, monomer. Zn(2+) serves as cofactor.

The protein localises to the periplasm. It catalyses the reaction a beta-lactam + H2O = a substituted beta-amino acid. Competitively inhibited by 4-morpholineethanesulfonic acid (MES), SB236050 and biphenyl tetrazoles (BPTs). Also inhibited by chelating agents such as EDTA and 1,10-phenanthroline. CcrA is not susceptible to inactivation by the beta-lactamase-blocking agents clavulanic acid or tazobactam. Confers resistance to the different beta-lactams antibiotics (penicillin, cephalosporin and carbapenem) via the hydrolysis of the beta-lactam ring. The polypeptide is Metallo-beta-lactamase type 2 (Bacteroides fragilis).